Here is a 265-residue protein sequence, read N- to C-terminus: Hydroxyethylthiazole kinase (265 aa).

Residue Met-50 participates in substrate binding. Residues Arg-125 and Thr-171 each contribute to the ATP site. Gly-198 serves as a coordination point for substrate.

Belongs to the Thz kinase family. Requires Mg(2+) as cofactor.

It carries out the reaction 5-(2-hydroxyethyl)-4-methylthiazole + ATP = 4-methyl-5-(2-phosphooxyethyl)-thiazole + ADP + H(+). It participates in cofactor biosynthesis; thiamine diphosphate biosynthesis; 4-methyl-5-(2-phosphoethyl)-thiazole from 5-(2-hydroxyethyl)-4-methylthiazole: step 1/1. Functionally, catalyzes the phosphorylation of the hydroxyl group of 4-methyl-5-beta-hydroxyethylthiazole (THZ). In Salmonella agona (strain SL483), this protein is Hydroxyethylthiazole kinase.